Consider the following 355-residue polypeptide: UDP-3-O-acylglucosamine N-acyltransferase (355 aa).

His258 (proton acceptor) is an active-site residue.

It belongs to the transferase hexapeptide repeat family. LpxD subfamily. In terms of assembly, homotrimer.

It catalyses the reaction a UDP-3-O-[(3R)-3-hydroxyacyl]-alpha-D-glucosamine + a (3R)-hydroxyacyl-[ACP] = a UDP-2-N,3-O-bis[(3R)-3-hydroxyacyl]-alpha-D-glucosamine + holo-[ACP] + H(+). Its pathway is bacterial outer membrane biogenesis; LPS lipid A biosynthesis. In terms of biological role, catalyzes the N-acylation of UDP-3-O-acylglucosamine using 3-hydroxyacyl-ACP as the acyl donor. Is involved in the biosynthesis of lipid A, a phosphorylated glycolipid that anchors the lipopolysaccharide to the outer membrane of the cell. The chain is UDP-3-O-acylglucosamine N-acyltransferase from Bradyrhizobium sp. (strain BTAi1 / ATCC BAA-1182).